The sequence spans 182 residues: SAGA-associated factor 11 homolog (182 aa).

Residues 61-84 form a disordered region; that stretch reads GSGAAVEGEPEDSKPYTIVDQPDT. The SGF11-type zinc-finger motif lies at 98–119; sequence CHCPNCNRIVAASRFAPHLEKC. The tract at residues 133–182 is disordered; the sequence is RIANTRDVGTGNYFGGDEDDEDDADWSGEKRKKKISQVRTNGSKKNGKTS. Residues 148 to 158 are compositionally biased toward acidic residues; that stretch reads GDEDDEDDADW.

The protein belongs to the SGF11 family. As to quaternary structure, component of some SAGA transcription coactivator-HAT complexes. Within the SAGA complex, participates in a subcomplex of SAGA called the DUB module (deubiquitination module).

The protein localises to the nucleus. Its function is as follows. Component of the transcription regulatory histone acetylation (HAT) complex SAGA, a multiprotein complex that activates transcription by remodeling chromatin and mediating histone acetylation and deubiquitination. Within the SAGA complex, participates in a subcomplex that specifically deubiquitinates histone H2B. The SAGA complex is recruited to specific gene promoters by activators, where it is required for transcription. The protein is SAGA-associated factor 11 homolog of Anopheles gambiae (African malaria mosquito).